A 640-amino-acid chain; its full sequence is Threonine--tRNA ligase (640 aa).

Residues 224-525 (DHRKLGKELD…LTEHYAGAFP (302 aa)) are catalytic. 3 residues coordinate Zn(2+): Cys-323, His-374, and His-502.

This sequence belongs to the class-II aminoacyl-tRNA synthetase family. In terms of assembly, homodimer. Zn(2+) is required as a cofactor.

Its subcellular location is the cytoplasm. It carries out the reaction tRNA(Thr) + L-threonine + ATP = L-threonyl-tRNA(Thr) + AMP + diphosphate + H(+). Its function is as follows. Catalyzes the attachment of threonine to tRNA(Thr) in a two-step reaction: L-threonine is first activated by ATP to form Thr-AMP and then transferred to the acceptor end of tRNA(Thr). Also edits incorrectly charged L-seryl-tRNA(Thr). This Tropheryma whipplei (strain TW08/27) (Whipple's bacillus) protein is Threonine--tRNA ligase.